A 221-amino-acid polypeptide reads, in one-letter code: uncharacterized protein (221 aa).

4 helical membrane-spanning segments follow: residues 41 to 63 (TGNIRIGLIVLSLIGSYILHSLI), 78 to 100 (AVMYTISILLIIGLWTNVFSSLS), 141 to 163 (ILAYDLPNVLVFGCTSLFVISFL), and 178 to 200 (LILRSFIILILVISTILFLVNLF).

The protein localises to the cell membrane. This is an uncharacterized protein from Archaeoglobus fulgidus (strain ATCC 49558 / DSM 4304 / JCM 9628 / NBRC 100126 / VC-16).